The chain runs to 207 residues: Ribosomal RNA small subunit methyltransferase G (207 aa).

S-adenosyl-L-methionine contacts are provided by residues G73, L78, 124-125 (VE), and R139.

This sequence belongs to the methyltransferase superfamily. RNA methyltransferase RsmG family.

The protein localises to the cytoplasm. It catalyses the reaction guanosine(527) in 16S rRNA + S-adenosyl-L-methionine = N(7)-methylguanosine(527) in 16S rRNA + S-adenosyl-L-homocysteine. Its function is as follows. Specifically methylates the N7 position of guanine in position 527 of 16S rRNA. This is Ribosomal RNA small subunit methyltransferase G from Klebsiella pneumoniae subsp. pneumoniae (strain ATCC 700721 / MGH 78578).